A 78-amino-acid chain; its full sequence is Putative antitoxin PF1222 (78 aa).

This sequence belongs to the UPF0330 family.

Its function is as follows. Possibly the antitoxin component of a type II toxin-antitoxin (TA) system. The sequence is that of Putative antitoxin PF1222 from Pyrococcus furiosus (strain ATCC 43587 / DSM 3638 / JCM 8422 / Vc1).